We begin with the raw amino-acid sequence, 160 residues long: Keratin-associated protein 13-4 (160 aa).

4 tandem repeats follow at residues 41-50 (CQLGSSLYRD), 51-60 (CQKTCWEPAS), 61-70 (CQKSCYHPRT), and 77-86 (CQTTCSGSLG). The interval 41-86 (CQLGSSLYRDCQKTCWEPASCQKSCYHPRTSMLCCPCQTTCSGSLG) is 4 X 10 AA approximate repeats.

It belongs to the PMG family. Interacts with hair keratins.

Functionally, in the hair cortex, hair keratin intermediate filaments are embedded in an interfilamentous matrix, consisting of hair keratin-associated proteins (KRTAP), which are essential for the formation of a rigid and resistant hair shaft through their extensive disulfide bond cross-linking with abundant cysteine residues of hair keratins. The matrix proteins include the high-sulfur and high-glycine-tyrosine keratins. This Hylobates agilis (Agile gibbon) protein is Keratin-associated protein 13-4 (KRTAP13-4).